Reading from the N-terminus, the 165-residue chain is Phosphopantetheine adenylyltransferase (165 aa).

Substrate is bound at residue threonine 11. ATP contacts are provided by residues 11-12 (TF) and histidine 19. Lysine 43, threonine 79, and arginine 93 together coordinate substrate. ATP is bound by residues glutamate 104 and 128-134 (LEPLNST).

The protein belongs to the bacterial CoaD family. Homohexamer. The cofactor is Mg(2+).

The protein localises to the cytoplasm. It carries out the reaction (R)-4'-phosphopantetheine + ATP + H(+) = 3'-dephospho-CoA + diphosphate. The protein operates within cofactor biosynthesis; coenzyme A biosynthesis; CoA from (R)-pantothenate: step 4/5. Its function is as follows. Reversibly transfers an adenylyl group from ATP to 4'-phosphopantetheine, yielding dephospho-CoA (dPCoA) and pyrophosphate. The polypeptide is Phosphopantetheine adenylyltransferase (Lactococcus lactis subsp. lactis (strain IL1403) (Streptococcus lactis)).